A 632-amino-acid chain; its full sequence is MAHETMSFQAEVKQLLHLMIHSLYSNKEIFLRELVSNASDAADKLRFEGLADNALYENDPNLRIRIGFDKAARTITIDDNGIGMSRDEAIANLGTIARSGTKEFFTKLSGDQQKDAALIGQFGVGFYSGFIVADKITVETRRAGLPANEAVRWESAGEGDFTIDAIERAQRGTTITLHLREGEDELLSSHRLKSIIQKYSDHIALPILMQKEEWDQEKGEMVLKDEDETVNQASALWTRSKSDITDEQYTQFYQHVAHDHQDPLTWTHNRVEGRSEYTQLLFVPAHAPFDLWNRDYRGGLKLYVKRVFIMDDAEQLLPQYLRFVKGVVDSADLPLNVSREILQESRDVKAIREGVTKRALSMLEELANAEEEAGKEKYKTFWSAFGQVLKEGLGEDHANRERIAKLLRFASTHGDTDAQDVSLADYVSRMKPEQSKIYYVTADTWQAAKNSPHLEVFRKKGVEVLLLTDRVDEWMLSFLHEFDGKPLASVARGDLDLGELNDEEKKAQEQAGEAIKPVVEKMKEALGDKVKEVRVTFRLTDSPSCLVADDNDMSGYLQRMLKAAGQNAPAMQPILEINPEHALVKQLNADSASFGDWCHLLFDQALLAEGGMLDDPASFVKRTNALLLSRAA.

Positions 1-339 are a; substrate-binding; sequence MAHETMSFQA…SADLPLNVSR (339 aa). The segment at 340-559 is b; the sequence is EILQESRDVK…DNDMSGYLQR (220 aa). A c region spans residues 560 to 632; sequence MLKAAGQNAP…TNALLLSRAA (73 aa).

Belongs to the heat shock protein 90 family. In terms of assembly, homodimer.

It localises to the cytoplasm. Its function is as follows. Molecular chaperone. Has ATPase activity. The sequence is that of Chaperone protein HtpG from Burkholderia ambifaria (strain ATCC BAA-244 / DSM 16087 / CCUG 44356 / LMG 19182 / AMMD) (Burkholderia cepacia (strain AMMD)).